We begin with the raw amino-acid sequence, 568 residues long: Urease subunit alpha (568 aa).

The Urease domain occupies 131-568; that stretch reads GGMDAHIHFI…LPLAQRYFLY (438 aa). Residues H136, H138, and K219 each contribute to the Ni(2+) site. At K219 the chain carries N6-carboxylysine. Residue H221 coordinates substrate. Positions 248 and 274 each coordinate Ni(2+). Catalysis depends on H322, which acts as the Proton donor. D362 contributes to the Ni(2+) binding site.

The protein belongs to the metallo-dependent hydrolases superfamily. Urease alpha subunit family. In terms of assembly, heterotrimer of UreA (gamma), UreB (beta) and UreC (alpha) subunits. Three heterotrimers associate to form the active enzyme. Ni cation serves as cofactor. Carboxylation allows a single lysine to coordinate two nickel ions.

The protein localises to the cytoplasm. The enzyme catalyses urea + 2 H2O + H(+) = hydrogencarbonate + 2 NH4(+). Its pathway is nitrogen metabolism; urea degradation; CO(2) and NH(3) from urea (urease route): step 1/1. The chain is Urease subunit alpha from Cereibacter sphaeroides (strain ATCC 17023 / DSM 158 / JCM 6121 / CCUG 31486 / LMG 2827 / NBRC 12203 / NCIMB 8253 / ATH 2.4.1.) (Rhodobacter sphaeroides).